The chain runs to 462 residues: Argininosuccinate lyase (462 aa).

This sequence belongs to the lyase 1 family. Argininosuccinate lyase subfamily.

The protein localises to the cytoplasm. It carries out the reaction 2-(N(omega)-L-arginino)succinate = fumarate + L-arginine. It participates in amino-acid biosynthesis; L-arginine biosynthesis; L-arginine from L-ornithine and carbamoyl phosphate: step 3/3. The chain is Argininosuccinate lyase from Chloroflexus aggregans (strain MD-66 / DSM 9485).